Reading from the N-terminus, the 581-residue chain is Phosphoinositide phospholipase C 2 (581 aa).

In terms of domain architecture, EF-hand-like spans 26 to 102 (EIKTIFEKYS…NPPLALHKVH (77 aa)). The region spanning 103–248 (HDMDAPISHY…LKRRIIISTK (146 aa)) is the PI-PLC X-box domain. Residues histidine 118 and histidine 164 contribute to the active site. Positions 279 to 314 (PSFIQRNKSEAKDDLDGNDDDDDDDDEDKSKINAPP) are disordered. Residues 294-305 (DGNDDDDDDDDE) show a composition bias toward acidic residues. In terms of domain architecture, PI-PLC Y-box spans 317–433 (KHLIAIHAGK…GYIKKPDLLL (117 aa)). One can recognise a C2 domain in the interval 434-563 (KSGSDSDIFD…EGIRAFPLHS (130 aa)).

Ca(2+) is required as a cofactor. Post-translationally, phosphorylation level varies significantly during early response to bacterial elicitor. In terms of tissue distribution, expressed in roots, shoots, leaves and flowers.

It is found in the cell membrane. It carries out the reaction a 1,2-diacyl-sn-glycero-3-phospho-(1D-myo-inositol-4,5-bisphosphate) + H2O = 1D-myo-inositol 1,4,5-trisphosphate + a 1,2-diacyl-sn-glycerol + H(+). The production of the second messenger molecules diacylglycerol (DAG) and inositol 1,4,5-trisphosphate (IP3) is mediated by activated phosphatidylinositol-specific phospholipase C enzymes. At physiological calcium concentration, the preferred substrate is phosphatidylinositol 4,5-bisphosphate versus phosphatidylinositol. This chain is Phosphoinositide phospholipase C 2 (PLC2), found in Arabidopsis thaliana (Mouse-ear cress).